We begin with the raw amino-acid sequence, 119 residues long: AQVGTGPGGNQKIGQYEYGSGGRPFLDVAQSGSTYTFNTTNLTVNLNHGTSGSTAYSYTGPRNTINGAYSPLNDAHYFGRDYWTPSTNFNQGGQGVRQAAADLGYSTADVIDAFRQVGV.

This sequence belongs to the peptidase M4 family. Requires Ca(2+) as cofactor. Zn(2+) is required as a cofactor.

It is found in the secreted. In terms of biological role, has staphylolytic activity. The chain is Achromolysin from Achromobacter lyticus.